The following is a 517-amino-acid chain: Serine hydroxymethyltransferase 1, mitochondrial (517 aa).

The N-terminal 30 residues, 1–30, are a transit peptide targeting the mitochondrion; it reads MAMAMALRRLSSSIDKPIRPLIRSTSCYMS. Position 286 is an N6-(pyridoxal phosphate)lysine (Lys286).

Belongs to the SHMT family. Homotetramer. Interacts with GLU1. Interacts with UBP16. The cofactor is pyridoxal 5'-phosphate. Post-translationally, ubiquitinated. In terms of tissue distribution, ubiquitous. Mostly expressed in leaves, less abundant in stems, flowers and siliques, and barely detectable in roots.

The protein resides in the mitochondrion. It localises to the cytoplasm. It carries out the reaction (6R)-5,10-methylene-5,6,7,8-tetrahydrofolate + glycine + H2O = (6S)-5,6,7,8-tetrahydrofolate + L-serine. Its pathway is one-carbon metabolism; tetrahydrofolate interconversion. In terms of biological role, functions in the photorespiratory pathway in catalyzing the interconversion of serine and glycine. Involved in controlling cell damage caused by abiotic stress, such as high light and salt and the hypersensitive defense response of plants. The sequence is that of Serine hydroxymethyltransferase 1, mitochondrial from Arabidopsis thaliana (Mouse-ear cress).